Reading from the N-terminus, the 134-residue chain is uncharacterized protein (134 aa).

The region spanning 10 to 70 (KETRQRIIDA…AVLASRQHPL (61 aa)) is the HTH tetR-type domain. A DNA-binding region (H-T-H motif) is located at residues 33 to 52 (TLDQIARKAGVTRGAVYWHF).

Functionally, unknown, does not seem to be involved in regulation of the ttgGHI or ttgVW operons. This is an uncharacterized protein from Pseudomonas putida (strain DOT-T1E).